Consider the following 1316-residue polypeptide: MLDVNFFDELRIGLATAEDIRQWSYGEVKKPETINYRTLKPEKDGLFCEKIFGPTRDWECYCGKYKRAPFKGIICERCGVEVTRAKVRRERMGHIELAAPVTHIWYFKGVPSRLGYLLDLAPKDLEKIIYFAAYVITSVDEEMRHNELSTLEAEMAVERKAVEDQRDGELEARAQKLEADLAELEAEGAKADARRKVRDGGEREMRQIRDRAQRELDRLEDIWSTFTKLAPKQLIVDENLYRELVDRYGEYFTGAMGAESIQKLIENFDIDAEAESLRDVIRNGKGQKKLRALKRLKVVAAFQQSGNSPMGMVLDAVPVIPPELRPMVQLDGGRFATSDLNDLYRRVINRNNRLKRLIDLGAPEIIVNNEKRMLQESVDALFDNGRRGRPVTGPGNRPLKSLSDLLKGKQGRFRQNLLGKRVDYSGRSVIVVGPQLKLHQCGLPKLMALELFKPFVMKRLVDLNHAQNIKSAKRMVERQRPQVWDVLEEVIAEHPVLLNRAPTLHRLGIQAFEPMLVEGKAIQLHPLVCEAFNADFDGDQMAVHLPLSAEAQAEARILMLSSNNILSPASGRPLAMPRLDMVTGLYYLTTEVPGDTGEYQPASGDHPETGVYSSPAEAIMAADRGVLSVRAKIKVRLTQLRPPVEIEAELFGHSGWQPGDAWMAETTLGRVMFNELLPLGYPFVNKQMHKKVQAAIINDLAERYPMIVVAQTVDKLKDAGFYWATRSGVTVSMADVLVPPRKKEILDHYEERADKVEKQFQRGALNHDERNEALVEIWKEATDEVGQALREHYPDDNPIITIVDSGATGNFTQTRTLAGMKGLVTNPKGEFIPRPVKSSFREGLTVLEYFINTHGARKGLADTALRTADSGYLTRRLVDVSQDVIVREHDCQTERGIVVELAERAPDGTLIRDPYIETSAYARTLGTDAVDEAGNVIVERGQDLGDPEIDALLAAGITQVKVRSVLTCATSTGVCATCYGRSMATGKLVDIGEAVGIVAAQSIGEPGTQLTMRTFHQGGVGEDITGGLPRVQELFEARVPRGKAPIADVTGRVRLEDGERFYKITIVPDDGGEEVVYDKISKRQRLRVFKHEDGSERVLSDGDHVEVGQQLMEGSADPHEVLRVQGPREVQIHLVREVQEVYRAQGVSIHDKHIEVIVRQMLRRVTIIDSGSTEFLPGSLIDRAEFEAENRRVVAEGGEPAAGRPVLMGITKASLATDSWLSAASFQETTRVLTDAAINCRSDKLNGLKENVIIGKLIPAGTGINRYRNIAVQPTEEARAAAYTIPSYEDQYYSPDFGAATGAAVPLDDYGYSDYR.

Zn(2+) contacts are provided by C60, C62, C75, and C78. Residues D535, D537, and D539 each coordinate Mg(2+). C891, C968, C975, and C978 together coordinate Zn(2+).

Belongs to the RNA polymerase beta' chain family. The RNAP catalytic core consists of 2 alpha, 1 beta, 1 beta' and 1 omega subunit. When a sigma factor is associated with the core the holoenzyme is formed, which can initiate transcription. Mg(2+) is required as a cofactor. Requires Zn(2+) as cofactor.

It catalyses the reaction RNA(n) + a ribonucleoside 5'-triphosphate = RNA(n+1) + diphosphate. Functionally, DNA-dependent RNA polymerase catalyzes the transcription of DNA into RNA using the four ribonucleoside triphosphates as substrates. This is DNA-directed RNA polymerase subunit beta' from Mycobacterium bovis (strain BCG / Tokyo 172 / ATCC 35737 / TMC 1019).